A 209-amino-acid polypeptide reads, in one-letter code: CAAX box protein 1 (209 aa).

The segment at Thr-182–Ala-209 is disordered. Cysteine methyl ester is present on Cys-206. Cys-206 carries S-farnesyl cysteine lipidation. Residues Val-207–Ala-209 constitute a propeptide, removed in mature form.

As to expression, ubiquitous.

Its subcellular location is the cell membrane. This chain is CAAX box protein 1, found in Homo sapiens (Human).